The sequence spans 412 residues: Serine hydroxymethyltransferase (412 aa).

(6S)-5,6,7,8-tetrahydrofolate-binding positions include Leu119 and 123-125 (GHL). At Lys228 the chain carries N6-(pyridoxal phosphate)lysine.

The protein belongs to the SHMT family. As to quaternary structure, homodimer. Pyridoxal 5'-phosphate serves as cofactor.

Its subcellular location is the cytoplasm. The catalysed reaction is (6R)-5,10-methylene-5,6,7,8-tetrahydrofolate + glycine + H2O = (6S)-5,6,7,8-tetrahydrofolate + L-serine. Its pathway is one-carbon metabolism; tetrahydrofolate interconversion. It functions in the pathway amino-acid biosynthesis; glycine biosynthesis; glycine from L-serine: step 1/1. Functionally, catalyzes the reversible interconversion of serine and glycine with tetrahydrofolate (THF) serving as the one-carbon carrier. This reaction serves as the major source of one-carbon groups required for the biosynthesis of purines, thymidylate, methionine, and other important biomolecules. Also exhibits THF-independent aldolase activity toward beta-hydroxyamino acids, producing glycine and aldehydes, via a retro-aldol mechanism. This chain is Serine hydroxymethyltransferase, found in Thermodesulfovibrio yellowstonii (strain ATCC 51303 / DSM 11347 / YP87).